The primary structure comprises 70 residues: Protein SlyX homolog (70 aa).

Belongs to the SlyX family.

The protein is Protein SlyX homolog of Shewanella sp. (strain MR-7).